A 574-amino-acid polypeptide reads, in one-letter code: Iron hydrogenase 1 (574 aa).

The 78-residue stretch at 1-78 (MKTIIINGVQ…GMIINTNSDA (78 aa)) folds into the 2Fe-2S ferredoxin-type domain. The [2Fe-2S] cluster site is built by Cys-34, Cys-46, Cys-49, and Cys-62. A 4Fe-4S His(Cys)3-ligated-type domain is found at 78–117 (AVNEKIKSRISQLLDIHEFKCGPCNRRENCEFLKLVIKYK). Residues His-94, Cys-98, Cys-101, Cys-107, Cys-147, Cys-150, Cys-153, Cys-157, Cys-190, Cys-193, Cys-196, Cys-200, Cys-300, Cys-355, Cys-499, and Cys-503 each contribute to the [4Fe-4S] cluster site. 4Fe-4S ferredoxin-type domains lie at 138–167 (KSLT…YAMK) and 181–210 (DEKC…EKSH). Cys-503 is a binding site for Fe(2+).

In terms of assembly, monomer. It depends on [2Fe-2S] cluster as a cofactor. [4Fe-4S] cluster serves as cofactor. Requires Fe(2+) as cofactor.

It catalyses the reaction H2 + 2 oxidized [2Fe-2S]-[ferredoxin] = 2 reduced [2Fe-2S]-[ferredoxin] + 2 H(+). The protein is Iron hydrogenase 1 of Clostridium pasteurianum.